The chain runs to 461 residues: D-phenylhydantoinase (461 aa).

A divalent metal cation contacts are provided by H59, H61, and K151. The residue at position 151 (K151) is an N6-carboxylysine. Position 156 (Y156) interacts with substrate. A divalent metal cation contacts are provided by H182 and H239. Residue S286 participates in substrate binding. D313 is an a divalent metal cation binding site. N335 serves as a coordination point for substrate.

It belongs to the metallo-dependent hydrolases superfamily. Hydantoinase/dihydropyrimidinase family. Homotetramer. It depends on a divalent metal cation as a cofactor. In terms of processing, carboxylation allows a single lysine to coordinate two divalent metal cations.

It catalyses the reaction D-5-phenylhydantoin + H2O = N-carbamoyl-D-phenylglycine + H(+). Its function is as follows. Catalyzes the stereospecific hydrolysis of the cyclic amide bond of D-hydantoin derivatives with an aromatic side chains at the 5'-position. Has no activity on dihydropyrimidines. The physiological function is unknown. In Escherichia coli O7:K1 (strain IAI39 / ExPEC), this protein is D-phenylhydantoinase.